The chain runs to 54 residues: Apelin receptor early endogenous ligand (54 aa).

The signal sequence occupies residues 1–23 (MRFQPLFWVFFIFAMSLLFISEQ).

The protein belongs to the Elabela/Toddler family. As to quaternary structure, interacts with APLNR. In terms of tissue distribution, expressed in the placenta. Expressed in syncytiotrophoblasts of the placenta labyrinth at 10.5 dpc. Expressed in placental chorionic trophoblasts (at protein level). Expressed in a small population of epiblast cells in the distal half of the embryo at 7 dpc. Expressed in newly formed definitive endoderm cells in the proximal half of the embryo, while it is not present in extra-embryonic endoderm at 7.5 dpc. This expression pattern then changes to the ventral aspect of the developing foregut pocket and the entire hindgut pocket at 8.5 dpc, before becoming restricted to the foregut overlying the heart and the posterior-most hindgut. Not detected in endothelial precursor cells of the yolk sac at 8 dpc. Expressed in extraembryonic tissues as well as in the chorion at 8.25 dpc. Expressed in endometrial stroma of the uterus of pregnant mice at 8.5 dpc. Expressed in the developing heart, caudal neural tube and trophobasts at 9 dpc. Expressed in the chorionic plate of the chorioallantoic placenta at 9 dpc. Expressed in the posterior half of the ventral neural tube at 9.25 dpc. Expressed in trophoblast cells at the periphery of the placenta at 9.5 dpc. Expressed in collecting ducts of the kidney of pregnant mice at 10.5 dpc. Expressed in the epicardium of the developing heart at 11.5 dpc. Expressed weakly in the adult heart. Expressed in endothelial cells and fibroblasts and weakly in cardiomyocytes.

The protein localises to the secreted. The protein resides in the extracellular space. Its function is as follows. Peptide hormone that functions as endogenous ligand for the G-protein-coupled apelin receptor (APLNR/APJ), that plays a role in the regulation of normal cardiovascular function and fluid homeostasis. Functions as a balanced agonist activating both G(i) protein pathway and beta-arrestin pathway of APLNR. Downstream G proteins activation, apelin can inhibit cAMP production and activate key intracellular effectors such as ERKs. On the other hand, APLNR activation induces beta-arrestin recruitment to the membrane leading to desensitization and internalization of the receptor. Required for mesendodermal differentiation, blood vessels formation and heart morphogenesis during early development and for adult cardiovascular homeostasis. Acts as a motogen by promoting mesendodermal cell migration during gastrulation by binding and activating APLNR. Acts as an early embryonic regulator of cellular movement with a role in migration and development of cardiac progenitor cells. May act as a chemoattractant for the activation of angioblast migration toward the embryonic midline, i.e. the position of the future vessel formation, during vasculogenesis. Positively regulates sinus venosus (SV)-derived endothelial cells migration into the developing heart to promote coronary blood vessel sprouting. Plays a role in placental vascular development; promotes placental trophoblast invasion and spiral artery remodeling in the uterus. Involved in the regulation of maternal cardiovascular homeostasis to prevent gestational hypertension and for potent cardioprotective functions during heart failure. Mediates myocardial contractility in an ERK1/2-dependent manner. The sequence is that of Apelin receptor early endogenous ligand from Mus musculus (Mouse).